The chain runs to 279 residues: NADPH-dependent 7-cyano-7-deazaguanine reductase (279 aa).

86–88 (IES) contacts substrate. 88–89 (SK) lines the NADPH pocket. Cysteine 187 functions as the Thioimide intermediate in the catalytic mechanism. Aspartate 194 acts as the Proton donor in catalysis. 226–227 (HE) lines the substrate pocket. An NADPH-binding site is contributed by 255–256 (RG).

It belongs to the GTP cyclohydrolase I family. QueF type 2 subfamily. In terms of assembly, homodimer.

The protein localises to the cytoplasm. It catalyses the reaction 7-aminomethyl-7-carbaguanine + 2 NADP(+) = 7-cyano-7-deazaguanine + 2 NADPH + 3 H(+). It functions in the pathway tRNA modification; tRNA-queuosine biosynthesis. In terms of biological role, catalyzes the NADPH-dependent reduction of 7-cyano-7-deazaguanine (preQ0) to 7-aminomethyl-7-deazaguanine (preQ1). The sequence is that of NADPH-dependent 7-cyano-7-deazaguanine reductase from Pasteurella multocida (strain Pm70).